Consider the following 263-residue polypeptide: Glutamate racemase (263 aa).

Residues aspartate 10–serine 11 and tyrosine 42–glycine 43 contribute to the substrate site. Cysteine 73 serves as the catalytic Proton donor/acceptor. Asparagine 74–serine 75 lines the substrate pocket. Catalysis depends on cysteine 183, which acts as the Proton donor/acceptor. Threonine 184–histidine 185 contributes to the substrate binding site.

Belongs to the aspartate/glutamate racemases family.

The catalysed reaction is L-glutamate = D-glutamate. It participates in cell wall biogenesis; peptidoglycan biosynthesis. Provides the (R)-glutamate required for cell wall biosynthesis. This chain is Glutamate racemase, found in Acidothermus cellulolyticus (strain ATCC 43068 / DSM 8971 / 11B).